Here is a 628-residue protein sequence, read N- to C-terminus: DNA-directed RNA polymerase III subunit RPC3 (628 aa).

Residues Glu360–Asp383 show a composition bias toward acidic residues. A disordered region spans residues Glu360–Asp422. The segment covering Thr390–Thr406 has biased composition (low complexity). The span at Val408–Asp422 shows a compositional bias: basic and acidic residues. The tract at residues Gly555–Val576 is leucine-zipper.

The protein belongs to the RNA polymerase beta chain family. As to quaternary structure, component of the RNA polymerase III (Pol III) complex consisting of 17 subunits.

The protein localises to the nucleus. Its function is as follows. DNA-dependent RNA polymerase catalyzes the transcription of DNA into RNA using the four ribonucleoside triphosphates as substrates. Specific core component of RNA polymerase III which synthesizes small RNAs, such as 5S rRNA and tRNAs. This chain is DNA-directed RNA polymerase III subunit RPC3 (RPC82), found in Chaetomium globosum (strain ATCC 6205 / CBS 148.51 / DSM 1962 / NBRC 6347 / NRRL 1970) (Soil fungus).